Reading from the N-terminus, the 360-residue chain is DNA primase large subunit PriL (360 aa).

Residues Cys237, Cys309, Cys318, and Cys325 each contribute to the [4Fe-4S] cluster site. The disordered stretch occupies residues 340–360 (DDGDDDDLADWRDREDDDSPD).

The protein belongs to the eukaryotic-type primase large subunit family. In terms of assembly, heterodimer of a small subunit (PriS) and a large subunit (PriL). Requires [4Fe-4S] cluster as cofactor.

In terms of biological role, regulatory subunit of DNA primase, an RNA polymerase that catalyzes the synthesis of short RNA molecules used as primers for DNA polymerase during DNA replication. Stabilizes and modulates the activity of the small subunit, increasing the rate of DNA synthesis, and conferring RNA synthesis capability. The DNA polymerase activity may enable DNA primase to also catalyze primer extension after primer synthesis. May also play a role in DNA repair. The chain is DNA primase large subunit PriL from Halobacterium salinarum (strain ATCC 29341 / DSM 671 / R1).